The sequence spans 180 residues: Oligoribonuclease (180 aa).

One can recognise an Exonuclease domain in the interval Leu7 to Leu170. Residue Tyr128 is part of the active site.

This sequence belongs to the oligoribonuclease family.

It localises to the cytoplasm. Its function is as follows. 3'-to-5' exoribonuclease specific for small oligoribonucleotides. The polypeptide is Oligoribonuclease (Pseudomonas fluorescens (strain Pf0-1)).